A 245-amino-acid polypeptide reads, in one-letter code: 1-(5-phosphoribosyl)-5-[(5-phosphoribosylamino)methylideneamino] imidazole-4-carboxamide isomerase (245 aa).

Residue Asp-8 is the Proton acceptor of the active site. Asp-130 acts as the Proton donor in catalysis.

Belongs to the HisA/HisF family.

The protein localises to the cytoplasm. It catalyses the reaction 1-(5-phospho-beta-D-ribosyl)-5-[(5-phospho-beta-D-ribosylamino)methylideneamino]imidazole-4-carboxamide = 5-[(5-phospho-1-deoxy-D-ribulos-1-ylimino)methylamino]-1-(5-phospho-beta-D-ribosyl)imidazole-4-carboxamide. It functions in the pathway amino-acid biosynthesis; L-histidine biosynthesis; L-histidine from 5-phospho-alpha-D-ribose 1-diphosphate: step 4/9. The sequence is that of 1-(5-phosphoribosyl)-5-[(5-phosphoribosylamino)methylideneamino] imidazole-4-carboxamide isomerase from Pseudomonas savastanoi pv. phaseolicola (strain 1448A / Race 6) (Pseudomonas syringae pv. phaseolicola (strain 1448A / Race 6)).